The primary structure comprises 739 residues: DNA ligase (739 aa).

D34 to D38 contacts NAD(+). The span at A49 to S59 shows a compositional bias: basic and acidic residues. The segment at A49–E70 is disordered. Residues S83–L84 and E117 each bind NAD(+). K119 acts as the N6-AMP-lysine intermediate in catalysis. R140, E175, K291, and K315 together coordinate NAD(+). Zn(2+) contacts are provided by C420, C423, C438, and C444. The BRCT domain maps to A660–L739.

This sequence belongs to the NAD-dependent DNA ligase family. LigA subfamily. It depends on Mg(2+) as a cofactor. Requires Mn(2+) as cofactor.

It catalyses the reaction NAD(+) + (deoxyribonucleotide)n-3'-hydroxyl + 5'-phospho-(deoxyribonucleotide)m = (deoxyribonucleotide)n+m + AMP + beta-nicotinamide D-nucleotide.. In terms of biological role, DNA ligase that catalyzes the formation of phosphodiester linkages between 5'-phosphoryl and 3'-hydroxyl groups in double-stranded DNA using NAD as a coenzyme and as the energy source for the reaction. It is essential for DNA replication and repair of damaged DNA. The chain is DNA ligase from Ruegeria pomeroyi (strain ATCC 700808 / DSM 15171 / DSS-3) (Silicibacter pomeroyi).